The primary structure comprises 349 residues: PDZ and LIM domain protein 2 (349 aa).

One can recognise a PDZ domain in the interval 1 to 84 (MALTVNVVGP…PLRLQLDRSQ (84 aa)). Disordered regions lie at residues 72-95 (SASPLRLQLDRSQTASPGQINGEG) and 108-147 (LRTHHNSQSSQRSACFSPASLSPRPDSPFSTPPPTSPIAL). Polar residues-rich tracts occupy residues 81–90 (DRSQTASPGQ) and 108–121 (LRTHHNSQSSQRSA). Residues Ser124, Ser127, Ser129, Ser134, and Ser137 each carry the phosphoserine modification. Phosphothreonine occurs at positions 138 and 142. Phosphoserine occurs at positions 143 and 163. Disordered regions lie at residues 168-212 (ATHH…SSLD) and 250-272 (ERGGTPAFVPSSLSPKASLPTSR). Over residues 176–192 (GQPTSQQAGHSSPSDST) the composition is skewed to polar residues. Phosphoserine occurs at positions 199, 204, 205, 209, 210, and 263. Over residues 199 to 211 (SPGRPSSPRLSSL) the composition is skewed to low complexity. The span at 260–270 (SSLSPKASLPT) shows a compositional bias: polar residues. An LIM zinc-binding domain is found at 281-341 (HTCEKCSVNI…EKHARQRYSM (61 aa)).

Interacts with alpha-actinins ACTN1 and ACTN4, FLNA and MYH9. Interacts (via LIM zinc-binding domain) with MKRN2. In terms of tissue distribution, highly expressed in cornea and lung. Expressed at intermediate level in sclera and combined tissues of the eye irido-corneal angle. Specifically expressed in the corneal epithelial cells but not in other corneal layers.

Its subcellular location is the cytoplasm. The protein localises to the cytoskeleton. Its function is as follows. Probable adapter protein located at the actin cytoskeleton that promotes cell attachment. Necessary for the migratory capacity of epithelial cells. Overexpression enhances cell adhesion to collagen and fibronectin and suppresses anchorage independent growth. May contribute to tumor cell migratory capacity. In Rattus norvegicus (Rat), this protein is PDZ and LIM domain protein 2 (Pdlim2).